A 504-amino-acid polypeptide reads, in one-letter code: NADH-quinone oxidoreductase subunit N (504 aa).

14 helical membrane-spanning segments follow: residues 9–29 (IALL…LSII), 38–58 (AVLT…HMMW), 78–98 (VLYV…GYVW), 114–134 (LLIA…IVLF), 135–155 (LGIE…VFSK), 164–184 (YIIL…FIYC), 216–236 (IVIG…CVPF), 254–274 (YLAT…LLIL), 282–302 (LHIF…LMAI), 309–329 (RMLA…LIAL), 341–361 (ISVY…IVNI), 392–412 (VIFV…GFIG), 425–447 (LWFL…LKII), and 476–496 (FMVI…QFIV).

Belongs to the complex I subunit 2 family. As to quaternary structure, NDH-1 is composed of 13 different subunits. Subunits NuoA, H, J, K, L, M, N constitute the membrane sector of the complex.

It localises to the cell inner membrane. It carries out the reaction a quinone + NADH + 5 H(+)(in) = a quinol + NAD(+) + 4 H(+)(out). NDH-1 shuttles electrons from NADH, via FMN and iron-sulfur (Fe-S) centers, to quinones in the respiratory chain. The immediate electron acceptor for the enzyme in this species is believed to be ubiquinone. Couples the redox reaction to proton translocation (for every two electrons transferred, four hydrogen ions are translocated across the cytoplasmic membrane), and thus conserves the redox energy in a proton gradient. In Blochmanniella floridana, this protein is NADH-quinone oxidoreductase subunit N.